The chain runs to 406 residues: LIM/homeobox protein Lhx1 (406 aa).

2 LIM zinc-binding domains span residues 4–54 and 63–117; these read CAGC…CKND and CAGC…CKED. Disordered stretches follow at residues 128 to 189 and 294 to 372; these read NSLH…TIKA and DFFP…SAEV. Low complexity predominate over residues 137 to 148; the sequence is SDPSLSPDSQDP. Over residues 151-167 the composition is skewed to basic and acidic residues; sequence DDAKDSESANVSDKEGG. At Ser-162 the chain carries Phosphoserine. Residues 180 to 239 constitute a DNA-binding region (homeobox); it reads RRGPRTTIKAKQLETLKAAFAATPKPTRHIREQLAQETGLNMRVIQVWFQNRRSKERRMK. Residues 315-327 show a composition bias toward low complexity; the sequence is PSSGPSGTPLGGL. Residues 352–362 show a composition bias toward pro residues; that stretch reads GDSPSPEPSLP.

Interacts with LDB1 via the tandem LIM domains.

The protein resides in the nucleus. Functionally, potential transcription factor. May play a role in early mesoderm formation and later in lateral mesoderm differentiation and neurogenesis. The chain is LIM/homeobox protein Lhx1 (Lhx1) from Mesocricetus auratus (Golden hamster).